The sequence spans 358 residues: Nuclease EXOG, mitochondrial (358 aa).

His132 acts as the Proton acceptor in catalysis. Position 163 (Asn163) interacts with a divalent metal cation.

The protein belongs to the DNA/RNA non-specific endonuclease family. As to quaternary structure, homodimer. A divalent metal cation is required as a cofactor.

It localises to the mitochondrion inner membrane. Endo/exonuclease with nicking activity towards supercoiled DNA, a preference for single-stranded DNA and 5'-3' exonuclease activity. This chain is Nuclease EXOG, mitochondrial (exog), found in Xenopus laevis (African clawed frog).